The chain runs to 308 residues: Acetylglutamate kinase (308 aa).

Residues 67 to 68, Arg-89, and Asn-193 each bind substrate; that span reads GG.

This sequence belongs to the acetylglutamate kinase family. ArgB subfamily.

Its subcellular location is the cytoplasm. It carries out the reaction N-acetyl-L-glutamate + ATP = N-acetyl-L-glutamyl 5-phosphate + ADP. The protein operates within amino-acid biosynthesis; L-arginine biosynthesis; N(2)-acetyl-L-ornithine from L-glutamate: step 2/4. In terms of biological role, catalyzes the ATP-dependent phosphorylation of N-acetyl-L-glutamate. In Nitratidesulfovibrio vulgaris (strain DP4) (Desulfovibrio vulgaris), this protein is Acetylglutamate kinase.